A 493-amino-acid chain; its full sequence is Ketol-acid reductoisomerase (NADP(+)) (493 aa).

In terms of domain architecture, KARI N-terminal Rossmann spans 14–208; sequence LDQLGRCRFM…GGDRAGVLES (195 aa). Residues 45–48, R68, R76, S78, and 108–110 each bind NADP(+); these read CGAQ and DKQ. The active site involves H132. G158 contributes to the NADP(+) binding site. KARI C-terminal knotted domains are found at residues 209–345 and 346–486; these read SFVA…APKA and DGIK…MTDM. Positions 217, 221, 390, and 394 each coordinate Mg(2+). S415 lines the substrate pocket.

It belongs to the ketol-acid reductoisomerase family. The cofactor is Mg(2+).

It carries out the reaction (2R)-2,3-dihydroxy-3-methylbutanoate + NADP(+) = (2S)-2-acetolactate + NADPH + H(+). The enzyme catalyses (2R,3R)-2,3-dihydroxy-3-methylpentanoate + NADP(+) = (S)-2-ethyl-2-hydroxy-3-oxobutanoate + NADPH + H(+). It participates in amino-acid biosynthesis; L-isoleucine biosynthesis; L-isoleucine from 2-oxobutanoate: step 2/4. It functions in the pathway amino-acid biosynthesis; L-valine biosynthesis; L-valine from pyruvate: step 2/4. Involved in the biosynthesis of branched-chain amino acids (BCAA). Catalyzes an alkyl-migration followed by a ketol-acid reduction of (S)-2-acetolactate (S2AL) to yield (R)-2,3-dihydroxy-isovalerate. In the isomerase reaction, S2AL is rearranged via a Mg-dependent methyl migration to produce 3-hydroxy-3-methyl-2-ketobutyrate (HMKB). In the reductase reaction, this 2-ketoacid undergoes a metal-dependent reduction by NADPH to yield (R)-2,3-dihydroxy-isovalerate. This is Ketol-acid reductoisomerase (NADP(+)) from Actinobacillus succinogenes (strain ATCC 55618 / DSM 22257 / CCUG 43843 / 130Z).